Reading from the N-terminus, the 419-residue chain is GTPase Obg (419 aa).

The 156-residue stretch at 1-156 folds into the Obg domain; that stretch reads MRFVDYVSIE…FYLDLQLKVM (156 aa). The region spanning 157 to 334 is the OBG-type G domain; it reads ADIGLVGKPN…LGENQKKLEI (178 aa). Residues 163–170, 188–192, 209–212, 278–281, and 315–317 each bind GTP; these read GKPNAGKS, FTTLV, DLPG, NKCD, and NII. Residues serine 170 and threonine 190 each contribute to the Mg(2+) site. The 78-residue stretch at 342–419 folds into the OCT domain; sequence IEFNLKAPFL…RIYEFEFHWN (78 aa).

This sequence belongs to the TRAFAC class OBG-HflX-like GTPase superfamily. OBG GTPase family. Monomer. Requires Mg(2+) as cofactor.

The protein resides in the cytoplasm. In terms of biological role, an essential GTPase which binds GTP, GDP and possibly (p)ppGpp with moderate affinity, with high nucleotide exchange rates and a fairly low GTP hydrolysis rate. Plays a role in control of the cell cycle, stress response, ribosome biogenesis and in those bacteria that undergo differentiation, in morphogenesis control. This chain is GTPase Obg, found in Mesomycoplasma hyopneumoniae (strain 7448) (Mycoplasma hyopneumoniae).